The chain runs to 89 residues: Small ribosomal subunit protein uS15 (89 aa).

The protein belongs to the universal ribosomal protein uS15 family. Part of the 30S ribosomal subunit. Forms a bridge to the 50S subunit in the 70S ribosome, contacting the 23S rRNA.

Its function is as follows. One of the primary rRNA binding proteins, it binds directly to 16S rRNA where it helps nucleate assembly of the platform of the 30S subunit by binding and bridging several RNA helices of the 16S rRNA. Functionally, forms an intersubunit bridge (bridge B4) with the 23S rRNA of the 50S subunit in the ribosome. The protein is Small ribosomal subunit protein uS15 of Chlorobium limicola (strain DSM 245 / NBRC 103803 / 6330).